A 321-amino-acid chain; its full sequence is Holliday junction branch migration complex subunit RuvB (321 aa).

The interval 1–173 is large ATPase domain (RuvB-L); it reads MMMEQECVDD…FGIISRLEFY (173 aa). Residues Ile-12, Arg-13, Gly-54, Lys-57, Thr-58, Thr-59, 120-122, Arg-163, Tyr-173, and Arg-210 contribute to the ATP site; that span reads EDF. Thr-58 serves as a coordination point for Mg(2+). The segment at 174–244 is small ATPAse domain (RuvB-S); it reads TPAELACIVK…LASDALARMD (71 aa). The segment at 247–321 is head domain (RuvB-H); the sequence is ELGLDQMDRK…KAYRHMNLLA (75 aa). Residues Arg-302 and Arg-307 each coordinate DNA.

It belongs to the RuvB family. Homohexamer. Forms an RuvA(8)-RuvB(12)-Holliday junction (HJ) complex. HJ DNA is sandwiched between 2 RuvA tetramers; dsDNA enters through RuvA and exits via RuvB. An RuvB hexamer assembles on each DNA strand where it exits the tetramer. Each RuvB hexamer is contacted by two RuvA subunits (via domain III) on 2 adjacent RuvB subunits; this complex drives branch migration. In the full resolvosome a probable DNA-RuvA(4)-RuvB(12)-RuvC(2) complex forms which resolves the HJ.

It localises to the cytoplasm. It carries out the reaction ATP + H2O = ADP + phosphate + H(+). The RuvA-RuvB-RuvC complex processes Holliday junction (HJ) DNA during genetic recombination and DNA repair, while the RuvA-RuvB complex plays an important role in the rescue of blocked DNA replication forks via replication fork reversal (RFR). RuvA specifically binds to HJ cruciform DNA, conferring on it an open structure. The RuvB hexamer acts as an ATP-dependent pump, pulling dsDNA into and through the RuvAB complex. RuvB forms 2 homohexamers on either side of HJ DNA bound by 1 or 2 RuvA tetramers; 4 subunits per hexamer contact DNA at a time. Coordinated motions by a converter formed by DNA-disengaged RuvB subunits stimulates ATP hydrolysis and nucleotide exchange. Immobilization of the converter enables RuvB to convert the ATP-contained energy into a lever motion, pulling 2 nucleotides of DNA out of the RuvA tetramer per ATP hydrolyzed, thus driving DNA branch migration. The RuvB motors rotate together with the DNA substrate, which together with the progressing nucleotide cycle form the mechanistic basis for DNA recombination by continuous HJ branch migration. Branch migration allows RuvC to scan DNA until it finds its consensus sequence, where it cleaves and resolves cruciform DNA. The sequence is that of Holliday junction branch migration complex subunit RuvB from Oleidesulfovibrio alaskensis (strain ATCC BAA-1058 / DSM 17464 / G20) (Desulfovibrio alaskensis).